We begin with the raw amino-acid sequence, 79 residues long: Cyclin-dependent kinases regulatory subunit 2 (79 aa).

It belongs to the CKS family. Forms a homohexamer that can probably bind six kinase subunits.

Binds to the catalytic subunit of the cyclin dependent kinases and is essential for their biological function. This chain is Cyclin-dependent kinases regulatory subunit 2 (cks2), found in Xenopus laevis (African clawed frog).